The following is a 224-amino-acid chain: Oxalate oxidase GF-3.8 (224 aa).

A signal peptide spans 1 to 23 (MGYSKNIASGMFAMLLLASAVLS). C33 and C49 form a disulfide bridge. A Cupin type-1 domain is found at 63-214 (SKLAKAGNTS…ALRVEAGVVE (152 aa)). Residues N70 and N75 are each glycosylated (N-linked (GlcNAc...) asparagine). The Mn(2+) site is built by H111, H113, E118, and H160.

This sequence belongs to the germin family. In terms of assembly, oligomer (believed to be a pentamer but probably hexamer).

It localises to the secreted. Its subcellular location is the extracellular space. It is found in the apoplast. The protein resides in the cytoplasm. The protein localises to the cell wall. It carries out the reaction oxalate + O2 + 2 H(+) = H2O2 + 2 CO2. Produces developmental and stress-related release of hydrogen peroxide in the apoplast. May play an important role in several aspects of plant growth and defense mechanisms. The polypeptide is Oxalate oxidase GF-3.8 (Triticum aestivum (Wheat)).